The primary structure comprises 39 residues: Alpha-conotoxin ArIA (39 aa).

The propeptide occupies 1-17 (SDGRNVAAKAFHRIGRT). 2 disulfide bridges follow: C22–C28 and C23–C36. The segment at 24 to 26 (SNP) is ser-Xaa-Pro motif, crucial for potent interaction with nAChR. P33 carries the post-translational modification 4-hydroxyproline; in ArIA.

It belongs to the conotoxin A superfamily. Expressed by the venom duct.

It is found in the secreted. Functionally, alpha-conotoxins act on postsynaptic membranes, they bind to the nicotinic acetylcholine receptors (nAChR) and thus inhibit them. This toxin acts as a competitive inhibitor and is 3-fold more potent on alpha-7/CHRNA7 nAChRs (IC(50)=6 nM) than on alpha-3-beta-2/CHRNA3-CHRNB2 nAChR (IC(50)=18 nM). Its function is as follows. Acts as a competitive inhibitor and is 33-fold more potent on alpha-7/CHRNA7 nAChRs (IC(50)=1.8 nM) than on alpha-3-beta-2/CHRNA3-CHRNB2 nAChR (IC(50)=60.1 nM). This chain is Alpha-conotoxin ArIA, found in Conus arenatus (Sand-dusted cone).